We begin with the raw amino-acid sequence, 142 residues long: Large ribosomal subunit protein uL13 (142 aa).

The protein belongs to the universal ribosomal protein uL13 family. In terms of assembly, part of the 50S ribosomal subunit.

This protein is one of the early assembly proteins of the 50S ribosomal subunit, although it is not seen to bind rRNA by itself. It is important during the early stages of 50S assembly. This is Large ribosomal subunit protein uL13 from Shewanella oneidensis (strain ATCC 700550 / JCM 31522 / CIP 106686 / LMG 19005 / NCIMB 14063 / MR-1).